The primary structure comprises 518 residues: Probable inorganic carbon transporter subunit DabB (518 aa).

13 helical membrane-spanning segments follow: residues methionine 3–leucine 23, isoleucine 37–valine 57, tryptophan 65–valine 85, cysteine 114–isoleucine 134, alanine 165–isoleucine 185, methionine 207–isoleucine 227, alanine 242–serine 262, methionine 264–methionine 284, methionine 302–valine 322, tryptophan 358–leucine 378, serine 379–arginine 399, leucine 403–threonine 423, and tryptophan 442–leucine 462.

It belongs to the inorganic carbon transporter (TC 9.A.2) DabB family. In terms of assembly, forms a complex with DabA.

The protein resides in the cell inner membrane. Intracellular DIC accumulation is sensitive to CCCP (carbonyl cyanide-m-chlorophenylhydrazone) and DCCD (N,N-dicyclohexylcarbodiimide) and therefore likely driven by either proton gradient, ATP, or both. In terms of biological role, part of an energy-coupled inorganic carbon pump involved in transport of dissolved inorganic carbon (DIC) with downstream gene dabA (Tcr_0854); has been suggested to be a proton-DIC symporter. This is Probable inorganic carbon transporter subunit DabB from Hydrogenovibrio crunogenus (strain DSM 25203 / XCL-2) (Thiomicrospira crunogena).